Reading from the N-terminus, the 116-residue chain is Large ribosomal subunit protein bL19 (116 aa).

This sequence belongs to the bacterial ribosomal protein bL19 family.

Functionally, this protein is located at the 30S-50S ribosomal subunit interface and may play a role in the structure and function of the aminoacyl-tRNA binding site. This is Large ribosomal subunit protein bL19 from Chloroflexus aggregans (strain MD-66 / DSM 9485).